The primary structure comprises 277 residues: Probable cytochrome c oxidase subunit 3 (277 aa).

A run of 6 helical transmembrane segments spans residues 20-40, 45-65, 88-108, 173-193, 211-231, and 255-275; these read PWPI…VSFM, FNHY…YSWW, IGMA…FASF, CVTA…MQAY, FYLA…FLIV, and AWYW…VYIF.

The protein belongs to the cytochrome c oxidase subunit 3 family.

The protein localises to the cell membrane. The enzyme catalyses 4 Fe(II)-[cytochrome c] + O2 + 8 H(+)(in) = 4 Fe(III)-[cytochrome c] + 2 H2O + 4 H(+)(out). In Rickettsia bellii (strain RML369-C), this protein is Probable cytochrome c oxidase subunit 3 (ctaE).